The following is a 173-amino-acid chain: Shikimate kinase (173 aa).

11–16 (GTGKTS) serves as a coordination point for ATP. Position 15 (Thr-15) interacts with Mg(2+). Substrate is bound by residues Asp-33, Arg-57, and Gly-79. ATP is bound at residue Arg-117. Arg-136 provides a ligand contact to substrate.

The protein belongs to the shikimate kinase family. Monomer. The cofactor is Mg(2+).

Its subcellular location is the cytoplasm. The enzyme catalyses shikimate + ATP = 3-phosphoshikimate + ADP + H(+). It participates in metabolic intermediate biosynthesis; chorismate biosynthesis; chorismate from D-erythrose 4-phosphate and phosphoenolpyruvate: step 5/7. In terms of biological role, catalyzes the specific phosphorylation of the 3-hydroxyl group of shikimic acid using ATP as a cosubstrate. The polypeptide is Shikimate kinase (Thermodesulfovibrio yellowstonii (strain ATCC 51303 / DSM 11347 / YP87)).